The chain runs to 591 residues: CTP synthase 1-A (591 aa).

One can recognise a Glutamine amidotransferase type-1 domain in the interval 300–554 (SIALVGKYTK…LASVGRLSQY (255 aa)). Residues Cys-399, His-526, and Glu-528 each act as for GATase activity in the active site.

It belongs to the CTP synthase family.

It catalyses the reaction UTP + L-glutamine + ATP + H2O = CTP + L-glutamate + ADP + phosphate + 2 H(+). It functions in the pathway pyrimidine metabolism; CTP biosynthesis via de novo pathway; CTP from UDP: step 2/2. Its function is as follows. This enzyme is involved in the de novo synthesis of CTP, a precursor of DNA, RNA and phospholipids. Catalyzes the ATP-dependent amination of UTP to CTP with either L-glutamine or ammonia as a source of nitrogen. In Xenopus laevis (African clawed frog), this protein is CTP synthase 1-A (ctps1-a).